A 108-amino-acid polypeptide reads, in one-letter code: MPYLKGAPMNLQEMEKNSAKAVVLLKAMANERRLQILCMLLDNELSVGELSSRLELSQSALSQHLAWLRRDGLVNTRKEAQTVFYTLSSTEVKAMIELLHRLYCQANQ.

Positions 13–107 (EMEKNSAKAV…LLHRLYCQAN (95 aa)) constitute an HTH arsR-type domain. The H-T-H motif DNA-binding region spans 47 to 66 (VGELSSRLELSQSALSQHLA).

Its function is as follows. Up-regulates the expression of the hemolysin gene, hlyA, and may promote expression of other virulence determinants in vivo. It may have both positive and negative regulator activities. The protein is Transcriptional activator HlyU (hlyU) of Vibrio cholerae serotype O1 (strain ATCC 39315 / El Tor Inaba N16961).